Here is a 447-residue protein sequence, read N- to C-terminus: GTPase Der (447 aa).

2 EngA-type G domains span residues 3 to 167 (PVIA…FAQR) and 181 to 354 (IRLA…AAAM). Residues 9–16 (GRPNVGKS), 56–60 (DTGGF), 119–122 (NKAE), 187–194 (GRPNVGKS), 234–238 (DTAGI), and 299–302 (NKWD) contribute to the GTP site. Residues 355 to 439 (SNLSTPKLTR…PLRIELRSGK (85 aa)) enclose the KH-like domain.

This sequence belongs to the TRAFAC class TrmE-Era-EngA-EngB-Septin-like GTPase superfamily. EngA (Der) GTPase family. As to quaternary structure, associates with the 50S ribosomal subunit.

GTPase that plays an essential role in the late steps of ribosome biogenesis. This chain is GTPase Der, found in Herminiimonas arsenicoxydans.